The chain runs to 371 residues: Putative glutamate--cysteine ligase 2 (371 aa).

Belongs to the glutamate--cysteine ligase type 2 family. YbdK subfamily.

It carries out the reaction L-cysteine + L-glutamate + ATP = gamma-L-glutamyl-L-cysteine + ADP + phosphate + H(+). In terms of biological role, ATP-dependent carboxylate-amine ligase which exhibits weak glutamate--cysteine ligase activity. This Paraburkholderia xenovorans (strain LB400) protein is Putative glutamate--cysteine ligase 2.